The following is a 448-amino-acid chain: Dual specificity mitogen-activated protein kinase kinase 5 (448 aa).

The segment at 18–25 (VIRIKIPN) is interaction with MAPK7. A PB1 domain is found at 18 to 109 (VIRIKIPNSG…EPLQIFPRAC (92 aa)). The interval 64-68 (DEDGD) is interaction with MAP3K2/MAP3K3. Residues 116–144 (NIHGLKVNTRAGPSQHTSPVVSDSLPSNS) form a disordered region. The interval 117–131 (IHGLKVNTRAGPSQH) is interaction with MAPK7. Polar residues predominate over residues 126–144 (AGPSQHTSPVVSDSLPSNS). Residues 166–419 (IRYRDTLGHG…PEELMGHPFI (254 aa)) enclose the Protein kinase domain. ATP is bound by residues 172–180 (LGHGNGGTV) and K195. The active-site Proton acceptor is the D283. S311 bears the Phosphoserine mark. T315 is modified (phosphothreonine).

It belongs to the protein kinase superfamily. STE Ser/Thr protein kinase family. MAP kinase kinase subfamily. As to quaternary structure, interacts with PARD6A, MAP3K3 and MAPK7. Forms a complex with SQSTM1 and PRKCZ or PRKCI. Requires Mg(2+) as cofactor. Post-translationally, activated by phosphorylation on Ser/Thr by MAP kinase kinase kinases. Expressed in the liver and brain (at protein level). In terms of tissue distribution, expressed in the liver, muscle, testes, lung, kidney, spleen, heart and brain (at protein level).

The protein localises to the cytoplasm. The protein resides in the cytosol. It localises to the membrane. The catalysed reaction is L-seryl-[protein] + ATP = O-phospho-L-seryl-[protein] + ADP + H(+). It catalyses the reaction L-threonyl-[protein] + ATP = O-phospho-L-threonyl-[protein] + ADP + H(+). The enzyme catalyses L-tyrosyl-[protein] + ATP = O-phospho-L-tyrosyl-[protein] + ADP + H(+). Functionally, acts as a scaffold for the formation of a ternary MAP3K2/MAP3K3-MAP3K5-MAPK7 signaling complex. Activation of this pathway appears to play a critical role in protecting cells from stress-induced apoptosis, neuronal survival and cardiac development and angiogenesis. As part of the MAPK/ERK signaling pathway, acts as a negative regulator of apoptosis in cardiomyocytes via promotion of STUB1/CHIP-mediated ubiquitination and degradation of ICER-type isoforms of CREM. This Rattus norvegicus (Rat) protein is Dual specificity mitogen-activated protein kinase kinase 5 (Map2k5).